The chain runs to 520 residues: MSRQLTLYPGAERLGFSGCSAVISGRFSGSHASVRAGVKGAAFGSRSLFCVGGGRRLALSSGGRSGGFTLGHGGASGGRPGGFVGTVFGSAGLGPTCPSVCPPGGIPQVVVNKSLLAPLNVELDPEIQKVRAQEREQIKALNNKFASFIDKVRFLEQQNQVLETKWELLQQLDQNNSRRSLEPVHESYISNLQKQLEILSGDRVRLDSELRNMREVVEDCKKRYEVEINRRTAAENEFVVLKKDVDAAYMNKVELQAKVDSMTDDIKFFKVLFEGEIAQMQSHISDTSVILSMDNNRQLDLDSILAEVRAQYEEIAVKSKAETENMYQCKIQELQATAGQHGDDLKLTKSEITEINRLIQRIHSEIGNMKKQCSNLETAIADAEQRGDCALKDARAKLDQLEGVLQQSKEELARMLREHQELMNVKLALDMEIATYRKLLESEESRMAGEYPSSVSISVVSSTNAGPGGAGFSVGFGASSNYNYRPLALEVKTKGSCGSELKDPPAKTSASSCVSKKASR.

The interval 1–133 (MSRQLTLYPG…DPEIQKVRAQ (133 aa)) is head. Residues 134–169 (EREQIKALNNKFASFIDKVRFLEQQNQVLETKWELL) are coil 1A. One can recognise an IF rod domain in the interval 134–447 (EREQIKALNN…KLLESEESRM (314 aa)). A linker 1 region spans residues 170–188 (QQLDQNNSRRSLEPVHESY). Residues 189 to 280 (ISNLQKQLEI…VLFEGEIAQM (92 aa)) form a coil 1B region. A linker 12 region spans residues 281–304 (QSHISDTSVILSMDNNRQLDLDSI). The tract at residues 305-443 (LAEVRAQYEE…ATYRKLLESE (139 aa)) is coil 2. The tract at residues 444–520 (ESRMAGEYPS…SSCVSKKASR (77 aa)) is tail. The interval 495-520 (GSCGSELKDPPAKTSASSCVSKKASR) is disordered.

Belongs to the intermediate filament family. As to quaternary structure, heterotetramer of two type I and two type II keratins.

Has a role in hair formation. Specific component of keratin intermediate filaments in the inner root sheath (IRS) of the hair follicle. The chain is Keratin, type II cytoskeletal 72 (Krt72) from Rattus norvegicus (Rat).